Reading from the N-terminus, the 108-residue chain is Thioredoxin (108 aa).

The Thioredoxin domain maps to 2 to 108 (SEHIVNVTDA…QLAAFLDANI (107 aa)). A disulfide bridge connects residues Cys-33 and Cys-36.

It belongs to the thioredoxin family.

In terms of biological role, participates in various redox reactions through the reversible oxidation of its active center dithiol to a disulfide and catalyzes dithiol-disulfide exchange reactions. This Pseudomonas aeruginosa (strain ATCC 15692 / DSM 22644 / CIP 104116 / JCM 14847 / LMG 12228 / 1C / PRS 101 / PAO1) protein is Thioredoxin (trxA).